The sequence spans 905 residues: Core protein VP3 (905 aa).

Belongs to the orbivirus VP3 family.

It localises to the virion. The VP3 protein is one of the five proteins (with VP1, VP4, VP6 and VP7) which form the inner capsid of the virus. This is Core protein VP3 (Segment-3) from African horse sickness virus 6 (AHSV-6).